A 296-amino-acid chain; its full sequence is Light-independent protochlorophyllide reductase iron-sulfur ATP-binding protein (296 aa).

ATP contacts are provided by residues 39–44 (GIGKST) and Lys68. Ser43 contributes to the Mg(2+) binding site. Residues Cys124 and Cys158 each coordinate [4Fe-4S] cluster. 209-210 (NR) contacts ATP.

This sequence belongs to the NifH/BchL/ChlL family. Homodimer. Protochlorophyllide reductase is composed of three subunits; ChlL, ChlN and ChlB. [4Fe-4S] cluster serves as cofactor.

It catalyses the reaction chlorophyllide a + oxidized 2[4Fe-4S]-[ferredoxin] + 2 ADP + 2 phosphate = protochlorophyllide a + reduced 2[4Fe-4S]-[ferredoxin] + 2 ATP + 2 H2O. Its pathway is porphyrin-containing compound metabolism; chlorophyll biosynthesis (light-independent). Functionally, component of the dark-operative protochlorophyllide reductase (DPOR) that uses Mg-ATP and reduced ferredoxin to reduce ring D of protochlorophyllide (Pchlide) to form chlorophyllide a (Chlide). This reaction is light-independent. The L component serves as a unique electron donor to the NB-component of the complex, and binds Mg-ATP. The chain is Light-independent protochlorophyllide reductase iron-sulfur ATP-binding protein from Prochlorococcus marinus (strain MIT 9211).